The chain runs to 460 residues: Cysteine--tRNA ligase (460 aa).

Cysteine 28 is a binding site for Zn(2+). The 'HIGH' region motif lies at 30-40 (MTVYDYCHLGH). Residues cysteine 209, histidine 234, and glutamate 238 each coordinate Zn(2+). A 'KMSKS' region motif is present at residues 266–270 (KMSKS). ATP is bound at residue lysine 269.

This sequence belongs to the class-I aminoacyl-tRNA synthetase family. Monomer. Zn(2+) serves as cofactor.

Its subcellular location is the cytoplasm. The enzyme catalyses tRNA(Cys) + L-cysteine + ATP = L-cysteinyl-tRNA(Cys) + AMP + diphosphate. The chain is Cysteine--tRNA ligase from Pseudomonas savastanoi pv. phaseolicola (strain 1448A / Race 6) (Pseudomonas syringae pv. phaseolicola (strain 1448A / Race 6)).